A 327-amino-acid chain; its full sequence is Glycerol-3-phosphate dehydrogenase [NAD(P)+] (327 aa).

3 residues coordinate NADPH: Trp13, His33, and Lys102. The sn-glycerol 3-phosphate site is built by Lys102, Gly130, and Ser132. Ala134 serves as a coordination point for NADPH. Residues Lys185, Asp238, Ser248, Arg249, and Asn250 each coordinate sn-glycerol 3-phosphate. Lys185 acts as the Proton acceptor in catalysis. Arg249 serves as a coordination point for NADPH. Residue Glu275 coordinates NADPH.

It belongs to the NAD-dependent glycerol-3-phosphate dehydrogenase family.

Its subcellular location is the cytoplasm. It carries out the reaction sn-glycerol 3-phosphate + NAD(+) = dihydroxyacetone phosphate + NADH + H(+). The catalysed reaction is sn-glycerol 3-phosphate + NADP(+) = dihydroxyacetone phosphate + NADPH + H(+). It functions in the pathway membrane lipid metabolism; glycerophospholipid metabolism. Catalyzes the reduction of the glycolytic intermediate dihydroxyacetone phosphate (DHAP) to sn-glycerol 3-phosphate (G3P), the key precursor for phospholipid synthesis. This is Glycerol-3-phosphate dehydrogenase [NAD(P)+] from Vesicomyosocius okutanii subsp. Calyptogena okutanii (strain HA).